The primary structure comprises 125 residues: Cytochrome c oxidase assembly factor 6 homolog (125 aa).

N-acetylalanine is present on G2. The region spanning 55 to 98 is the CHCH domain; that stretch reads RQVCWGARDEYWKCLDENLEDASQCKKLRSSFESSCPQQWIKYF. The short motif at 58–68 is the Cx9C motif element; it reads CWGARDEYWKC. Intrachain disulfides connect C58-C90 and C68-C79. A Cx10C motif motif is present at residues 79 to 90; it reads CKKLRSSFESSC.

Belongs to the cytochrome c oxidase subunit 6B family. Interacts with COA1. Found in a complex with TMEM177, COX20, MT-CO2/COX2, COX18, SCO1 and SCO2. Interacts with MT-CO2/COX2 and SCO2. Interacts with SCO1. Interacts with COX20 in a MT-CO2/COX2- and COX18-dependent manner. Interacts with COX16.

Its subcellular location is the mitochondrion intermembrane space. Involved in the maturation of the mitochondrial respiratory chain complex IV subunit MT-CO2/COX2. Thereby, may regulate early steps of complex IV assembly. Mitochondrial respiratory chain complex IV or cytochrome c oxidase is the component of the respiratory chain that catalyzes the transfer of electrons from intermembrane space cytochrome c to molecular oxygen in the matrix and as a consequence contributes to the proton gradient involved in mitochondrial ATP synthesis. May also be required for efficient formation of respiratory supercomplexes comprised of complexes III and IV. The protein is Cytochrome c oxidase assembly factor 6 homolog (COA6) of Homo sapiens (Human).